The following is a 417-amino-acid chain: Tyrosine--tRNA ligase (417 aa).

Y39 contributes to the L-tyrosine binding site. The short motif at 44–53 (PTAPSLHAGG) is the 'HIGH' region element. The L-tyrosine site is built by Y176 and Q180. Positions 236-240 (KMGKS) match the 'KMSKS' region motif. K239 is a binding site for ATP. Positions 350 to 417 (IGVLALMVLA…KKRHVLIRPA (68 aa)) constitute an S4 RNA-binding domain.

It belongs to the class-I aminoacyl-tRNA synthetase family. TyrS type 1 subfamily. As to quaternary structure, homodimer.

It is found in the cytoplasm. The catalysed reaction is tRNA(Tyr) + L-tyrosine + ATP = L-tyrosyl-tRNA(Tyr) + AMP + diphosphate + H(+). Catalyzes the attachment of tyrosine to tRNA(Tyr) in a two-step reaction: tyrosine is first activated by ATP to form Tyr-AMP and then transferred to the acceptor end of tRNA(Tyr). This is Tyrosine--tRNA ligase from Brucella suis biovar 1 (strain 1330).